Reading from the N-terminus, the 606-residue chain is Leucine-rich repeat and immunoglobulin-like domain-containing nogo receptor-interacting protein 1 (606 aa).

Residues Met1 to Gly27 form the signal peptide. 2 cysteine pairs are disulfide-bonded: Cys28–Cys34 and Cys32–Cys43. One can recognise an LRRNT domain in the interval Cys28 to Thr57. The Extracellular portion of the chain corresponds to Cys28–Thr547. LRR repeat units lie at residues Asp58–Ala79, Tyr82–Gly103, Asn106–Gly127, Asn130–Asp151, Asn154–Gly175, Ser178–His199, Gly202–Arg223, Asn250–His271, Tyr274–Glu295, Arg298–Gly319, and His322–Ser343. Residue Asn130 is glycosylated (N-linked (GlcNAc...) asparagine). Asn188 carries an N-linked (GlcNAc...) asparagine glycan. N-linked (GlcNAc...) asparagine glycans are attached at residues Asn250, Asn260, and Asn279. Residues Asn327, Asn374, Asn478, Asn491, Asn512, Asn523, and Asn528 are each glycosylated (N-linked (GlcNAc...) asparagine). In terms of domain architecture, LRRCT spans Asn355–Arg409. 3 disulfides stabilise this stretch: Cys359/Cys382, Cys361/Cys407, and Cys432/Cys483. An Ig-like C2-type domain is found at Pro397–Ala496. Residues Thr548–Trp568 traverse the membrane as a helical segment. Residues Ser569–Ile606 are Cytoplasmic-facing.

The protein localises to the cell membrane. In terms of biological role, may play a role in regulating axonal regeneration and plasticity in the adult central nervous system. This chain is Leucine-rich repeat and immunoglobulin-like domain-containing nogo receptor-interacting protein 1 (lingo1), found in Xenopus tropicalis (Western clawed frog).